Here is a 193-residue protein sequence, read N- to C-terminus: Acyl carrier protein phosphodiesterase (193 aa).

Belongs to the AcpH family.

The enzyme catalyses holo-[ACP] + H2O = apo-[ACP] + (R)-4'-phosphopantetheine + H(+). Functionally, converts holo-ACP to apo-ACP by hydrolytic cleavage of the phosphopantetheine prosthetic group from ACP. This is Acyl carrier protein phosphodiesterase from Klebsiella pneumoniae (strain 342).